Consider the following 244-residue polypeptide: 1-(5-phosphoribosyl)-5-[(5-phosphoribosylamino)methylideneamino] imidazole-4-carboxamide isomerase (244 aa).

Catalysis depends on Asp-10, which acts as the Proton acceptor. The Proton donor role is filled by Asp-132.

The protein belongs to the HisA/HisF family.

The protein resides in the cytoplasm. It carries out the reaction 1-(5-phospho-beta-D-ribosyl)-5-[(5-phospho-beta-D-ribosylamino)methylideneamino]imidazole-4-carboxamide = 5-[(5-phospho-1-deoxy-D-ribulos-1-ylimino)methylamino]-1-(5-phospho-beta-D-ribosyl)imidazole-4-carboxamide. The protein operates within amino-acid biosynthesis; L-histidine biosynthesis; L-histidine from 5-phospho-alpha-D-ribose 1-diphosphate: step 4/9. This Stenotrophomonas maltophilia (strain R551-3) protein is 1-(5-phosphoribosyl)-5-[(5-phosphoribosylamino)methylideneamino] imidazole-4-carboxamide isomerase.